Reading from the N-terminus, the 425-residue chain is SrfA-induced gene G protein (425 aa).

Asn-25, Asn-28, and Asn-36 each carry an N-linked (GlcNAc...) asparagine glycan. Coiled coils occupy residues 41-91, 172-208, and 292-340; these read RDSE…RIRN, HEKQ…MKRT, and KFGQ…NYNI. Residues 91–113 form a helical membrane-spanning segment; that stretch reads NVFKVLITILVGSIIYGTYTNQF. A disordered region spans residues 393-413; sequence KKPHADSNGHPKPYPHHHLLN.

The protein localises to the membrane. This Dictyostelium discoideum (Social amoeba) protein is SrfA-induced gene G protein (sigG).